A 711-amino-acid polypeptide reads, in one-letter code: Hydroperoxide isomerase ALOXE3 (711 aa).

Residues 2–119 (AVYRLCVTTG…TVELRPGTAR (118 aa)) form the PLAT domain. The Lipoxygenase domain maps to 119-711 (RTICQDALPL…PPLIENSVSI (593 aa)). Fe cation-binding residues include His-408, His-413, His-588, Asn-592, and Ile-711.

It belongs to the lipoxygenase family. Requires Fe cation as cofactor.

It localises to the cytoplasm. The enzyme catalyses a hydroperoxyeicosatetraenoate = a hydroxy-epoxy-eicosatetraenoate. It carries out the reaction a hydroperoxyeicosatetraenoate = an oxoeicosatetraenoate + H2O. It catalyses the reaction (12R)-hydroperoxy-(5Z,8Z,10E,14Z)-eicosatetraenoate = (8R)-hydroxy-(11R,12R)-epoxy-(5Z,9E,14Z)-eicosatrienoate. The catalysed reaction is (12S)-hydroperoxy-(5Z,8Z,10E,14Z)-eicosatetraenoate = (8R)-hydroxy-(11S,12S)-epoxy-(5Z,9E,14Z)-eicosatrienoate. The enzyme catalyses (12S)-hydroperoxy-(5Z,8Z,10E,14Z)-eicosatetraenoate = (10R)-hydroxy-(11S,12S)-epoxy-(5Z,8Z,14Z)-eicosatrienoate. It carries out the reaction (15S)-hydroperoxy-(5Z,8Z,11Z,13E)-eicosatetraenoate = (13R)-hydroxy-(14S,15S)-epoxy-(5Z,8Z,11Z)-eicosatrienoate. It catalyses the reaction (5S)-hydroperoxy-(6E,8Z,11Z,14Z)-eicosatetraenoate = 7R-hydroxy-5S,6S-epoxy-(8Z,11Z,14Z)-eicosatrienoate. The catalysed reaction is (13S)-hydroperoxy-(9Z,11E)-octadecadienoate = 11-hydroxy-(12S,13S)-epoxy-(9Z)-octadecenoate. The enzyme catalyses N-[omega-(9R)-hydroperoxy-(10E,12Z)-octadecadienoyloxy]acyl-beta-D-glucosyl-(1&lt;-&gt;1)-octadecasphing-4E-enine = a N-[omega-(9R,10R)-epoxy-(13R)-hydroxy-(11E)-octadecenoyloxy]acyl-beta-D-glucosyl-(1&lt;-&gt;1)-sphing-4E-enine. It carries out the reaction a N-[omega-(9R)-hydroperoxy-(10E,12Z)-octadecadienoyloxy]-acylsphin-4E-enine = a N-[omega-(9R,10R)-epoxy-(13R)-hydroxy-(11E)-octadecenoyloxy]-acylsphing-4E-enine. It catalyses the reaction (12R)-hydroperoxy-(5Z,8Z,10E,14Z)-eicosatetraenoate = 12-oxo-(5Z,8Z,10E,14Z)-eicosatetraenoate + H2O. The catalysed reaction is (12S)-hydroperoxy-(5Z,8Z,10E,14Z)-eicosatetraenoate = 12-oxo-(5Z,8Z,10E,14Z)-eicosatetraenoate + H2O. The enzyme catalyses (15S)-hydroperoxy-(5Z,8Z,11Z,13E)-eicosatetraenoate = 15-oxo-(5Z,8Z,11Z,13E)-eicosatetraenoate + H2O. It carries out the reaction (13S)-hydroperoxy-(9Z,11E)-octadecadienoate = 13-oxo-(9Z,11E)-octadecadienoate + H2O. It catalyses the reaction (8S)-hydroperoxy-(5Z,9E,11Z,14Z)-eicosatetraenoate = (10R)-hydroxy-(8S,9S)-epoxy-(5Z,11Z,14Z)-eicosatrienoate. The catalysed reaction is (8R)-hydroperoxy-(5Z,9E,11Z,14Z)-eicosatetraenoate = 8-oxo-(5Z,9E,11Z,14Z)-eicosatetraenoate + H2O. The enzyme catalyses (8S)-hydroperoxy-(5Z,9E,11Z,14Z)-eicosatetraenoate = 8-oxo-(5Z,9E,11Z,14Z)-eicosatetraenoate + H2O. The protein operates within lipid metabolism; hydroperoxy eicosatetraenoic acid biosynthesis. Its pathway is lipid metabolism; sphingolipid metabolism. In terms of biological role, non-heme iron-containing lipoxygenase which is atypical in that it displays a prominent hydroperoxide isomerase activity and a reduced lipoxygenases activity. The hydroperoxide isomerase activity catalyzes the isomerization of hydroperoxides, derived from arachidonic and linoleic acid by ALOX12B, into hepoxilin-type epoxyalcohols and ketones. In presence of oxygen, oxygenates polyunsaturated fatty acids, including arachidonic acid, to produce fatty acid hydroperoxides. In the skin, acts downstream of ALOX12B on the linoleate moiety of esterified omega-hydroxyacyl-sphingosine (EOS) ceramides to produce an epoxy-ketone derivative, a crucial step in the conjugation of omega-hydroxyceramide to membrane proteins. Therefore plays a crucial role in the synthesis of corneocytes lipid envelope and the establishment of the skin barrier to water loss. In parallel, it may have a signaling function in barrier formation through the production of hepoxilins metabolites. Also plays a role in adipocyte differentiation through hepoxilin A3 and hepoxilin B3 production which in turn activate PPARG. Through the production of hepoxilins in the spinal cord, it may regulate inflammatory tactile allodynia. The chain is Hydroperoxide isomerase ALOXE3 from Rattus norvegicus (Rat).